Reading from the N-terminus, the 182-residue chain is Thymidine kinase (182 aa).

8 to 15 (GPMFSGKT) lines the ATP pocket. Residue E85 is the Proton acceptor of the active site. A substrate-binding site is contributed by F117. Positions 142 and 145 each coordinate Zn(2+). Position 161-165 (161-165 (IIEIG)) interacts with substrate. Residues C174 and C177 each coordinate Zn(2+).

This sequence belongs to the thymidine kinase family.

It carries out the reaction thymidine + ATP = dTMP + ADP + H(+). This is Thymidine kinase (TK) from Amsacta moorei entomopoxvirus (AmEPV).